Reading from the N-terminus, the 421-residue chain is D-amino acid dehydrogenase (421 aa).

4–18 (VLVLGSGVVGLTSAW) is a binding site for FAD.

This sequence belongs to the DadA oxidoreductase family. FAD serves as cofactor.

The catalysed reaction is a D-alpha-amino acid + A + H2O = a 2-oxocarboxylate + AH2 + NH4(+). In terms of biological role, oxidative deamination of D-amino acids. In Vibrio cholerae serotype O1 (strain ATCC 39315 / El Tor Inaba N16961), this protein is D-amino acid dehydrogenase.